A 307-amino-acid chain; its full sequence is Nicotinamide/nicotinic acid mononucleotide adenylyltransferase 2 (307 aa).

Residues serine 16 and phenylalanine 17 each coordinate NAD(+). Residue histidine 24 coordinates ATP. Tryptophan 92, threonine 95, glycine 200, aspartate 202, leucine 212, tryptophan 213, and arginine 232 together coordinate NAD(+). Threonine 271–arginine 274 contacts ATP.

The protein belongs to the eukaryotic NMN adenylyltransferase family. In terms of assembly, monomer. Mg(2+) is required as a cofactor.

Its subcellular location is the golgi apparatus membrane. The protein resides in the cytoplasmic vesicle membrane. The protein localises to the cytoplasm. It localises to the cell projection. It is found in the axon. The catalysed reaction is beta-nicotinamide D-ribonucleotide + ATP + H(+) = diphosphate + NAD(+). It catalyses the reaction nicotinate beta-D-ribonucleotide + ATP + H(+) = deamido-NAD(+) + diphosphate. It functions in the pathway cofactor biosynthesis; NAD(+) biosynthesis; NAD(+) from nicotinamide D-ribonucleotide: step 1/1. The protein operates within cofactor biosynthesis; NAD(+) biosynthesis; deamido-NAD(+) from nicotinate D-ribonucleotide: step 1/1. Functionally, nicotinamide/nicotinate-nucleotide adenylyltransferase that acts as an axon maintenance factor. Axon survival factor required for the maintenance of healthy axons: acts by delaying Wallerian axon degeneration, an evolutionarily conserved process that drives the loss of damaged axons. Catalyzes the formation of NAD(+) from nicotinamide mononucleotide (NMN) and ATP. Can also use the deamidated form; nicotinic acid mononucleotide (NaMN) as substrate but with a lower efficiency. Also catalyzes the reverse reaction, i.e. the pyrophosphorolytic cleavage of NAD(+). For the pyrophosphorolytic activity prefers NAD(+), NADH and NaAD as substrates and degrades nicotinic acid adenine dinucleotide phosphate (NHD) less effectively. Also acts as an activator of ADP-ribosylation by supporting the catalytic activity of PARP16 and promoting mono-ADP-ribosylation of ribosomes by PARP16. May be involved in the maintenance of axonal integrity. The chain is Nicotinamide/nicotinic acid mononucleotide adenylyltransferase 2 (nmnat2) from Xenopus tropicalis (Western clawed frog).